Here is a 215-residue protein sequence, read N- to C-terminus: Large ribosomal subunit protein bL25 (215 aa).

The segment at 170–215 (DPDTSVASVTPPTTEEDLDTDDVDENAEPELVGAENDSADEESENK) is disordered. 2 stretches are compositionally biased toward acidic residues: residues 183 to 197 (TEED…ENAE) and 206 to 215 (DSADEESENK).

It belongs to the bacterial ribosomal protein bL25 family. CTC subfamily. As to quaternary structure, part of the 50S ribosomal subunit; part of the 5S rRNA/L5/L18/L25 subcomplex. Contacts the 5S rRNA. Binds to the 5S rRNA independently of L5 and L18.

This is one of the proteins that binds to the 5S RNA in the ribosome where it forms part of the central protuberance. The sequence is that of Large ribosomal subunit protein bL25 from Oceanobacillus iheyensis (strain DSM 14371 / CIP 107618 / JCM 11309 / KCTC 3954 / HTE831).